A 384-amino-acid polypeptide reads, in one-letter code: MFPERGASEEEVLRELEEKTREDLTFDSGKILGSMCTYPHPFAVKVVMKYIDRNLGDPGLHIGSQKIEKEAVDMLANLLGLEKGYGHIVSGGTEANILAVRAMRNLAGIEKPELILPESAHFSFIKAAEMLGVKLVWAELNDDYTVNVKDVEKKITDRTIGIVGIAGTTGLGVVDDIPALSDLALDYGLPLHVDAAFGGFVIPFAKALGYEIPDFDFRLKGVKSITIDPHKMGMVPIPAGGIIFREKKFLDSISVLAPYLAGGKIWQATITGTRPGANALAVWAMIKHLGFDGYKEVVKEKMELARWFASELKKIPGIYLIREPVLNIVSFGSEKLEELEKELKARGWGVSAHRGYIRIVVMPHVKREHLEEFLRDLREIAKRL.

Residue lysine 231 is modified to N6-(pyridoxal phosphate)lysine.

Belongs to the group II decarboxylase family. MfnA subfamily. In terms of assembly, homodimer. Can also form homohexamers. Requires pyridoxal 5'-phosphate as cofactor.

It catalyses the reaction L-aspartate + H(+) = beta-alanine + CO2. Its pathway is cofactor biosynthesis; coenzyme A biosynthesis. Its activity is regulated as follows. Inhibited by hydroxylamine. In terms of biological role, catalyzes the decarboxylation of L-aspartate to produce beta-alanine. In vitro, can also catalyze the decarboxylation of L-glutamate to produce 4-aminobutanoate, but this activity does not seem necessary in vivo. Shows much higher activity with L-aspartate than with L-glutamate. Does not decarboxylate L-tyrosine. The sequence is that of L-aspartate decarboxylase from Thermococcus kodakarensis (strain ATCC BAA-918 / JCM 12380 / KOD1) (Pyrococcus kodakaraensis (strain KOD1)).